The following is a 729-amino-acid chain: Monosaccharide-sensing protein 2 (729 aa).

Helical transmembrane passes span methionine 1 to aspartate 21, leucine 47 to alanine 67, isoleucine 81 to leucine 101, leucine 104 to threonine 124, phenylalanine 139 to proline 159, and leucine 165 to leucine 185. The span at valine 347 to aspartate 363 shows a compositional bias: acidic residues. Disordered regions lie at residues valine 347–serine 367 and glutamate 423–serine 442. Basic and acidic residues predominate over residues glutamate 423 to glycine 434. 2 positions are modified to phosphoserine: serine 438 and glycine 448. 6 helical membrane passes run alanine 507 to leucine 527, alanine 553 to methionine 573, leucine 585 to valine 605, isoleucine 610 to glycine 630, isoleucine 650 to leucine 670, and leucine 679 to isoleucine 699.

This sequence belongs to the major facilitator superfamily. Sugar transporter (TC 2.A.1.1) family. In terms of tissue distribution, mostly expressed in roots and stems, and, to a lower extent, in juvenile and adult leaves, and in flower tissues.

The protein localises to the vacuole membrane. It catalyses the reaction D-glucose(out) + H(+)(in) = D-glucose(in) + H(+)(out). The enzyme catalyses sucrose(out) + H(+)(in) = sucrose(in) + H(+)(out). Its function is as follows. Sugar proton-coupled antiporter which contributes to vacuolar sugar import (e.g. monosaccharides including glucose, sucrose and fructose), particularly during stress responses (e.g. in response to cold). The sequence is that of Monosaccharide-sensing protein 2 from Arabidopsis thaliana (Mouse-ear cress).